We begin with the raw amino-acid sequence, 368 residues long: Aspartate-semialdehyde dehydrogenase (368 aa).

NADP(+) is bound by residues 10-13, 37-38, and glutamine 72; these read RGMV and TS. Arginine 101 provides a ligand contact to phosphate. The active-site Acyl-thioester intermediate is cysteine 134. NADP(+) is bound by residues 160–161 and proline 191; that span reads SG. Glutamate 239 serves as a coordination point for substrate. Lysine 242 contributes to the phosphate binding site. Substrate is bound at residue arginine 266. Histidine 273 functions as the Proton acceptor in the catalytic mechanism. Residue glutamine 349 participates in NADP(+) binding.

It belongs to the aspartate-semialdehyde dehydrogenase family. As to quaternary structure, homodimer.

The enzyme catalyses L-aspartate 4-semialdehyde + phosphate + NADP(+) = 4-phospho-L-aspartate + NADPH + H(+). Its pathway is amino-acid biosynthesis; L-lysine biosynthesis via DAP pathway; (S)-tetrahydrodipicolinate from L-aspartate: step 2/4. The protein operates within amino-acid biosynthesis; L-methionine biosynthesis via de novo pathway; L-homoserine from L-aspartate: step 2/3. It functions in the pathway amino-acid biosynthesis; L-threonine biosynthesis; L-threonine from L-aspartate: step 2/5. In terms of biological role, catalyzes the NADPH-dependent formation of L-aspartate-semialdehyde (L-ASA) by the reductive dephosphorylation of L-aspartyl-4-phosphate. The polypeptide is Aspartate-semialdehyde dehydrogenase (Azotobacter vinelandii).